A 480-amino-acid chain; its full sequence is Uridine/deoxyuridine transporter (480 aa).

Helical transmembrane passes span 14-34 (VGSI…FQLN), 55-75 (SIAL…LFLP), 93-113 (LTMI…LMIG), 115-135 (ILQG…HVKV), 147-167 (ILTS…GWLV), 174-194 (SVFF…SFGT), 207-227 (WTGV…VNAL), 239-259 (WLLA…FWQV), 280-300 (GLLI…NGII), 320-340 (LVTL…SGFL), 358-378 (IIGI…LLLL), 382-402 (FIGI…GIVL), 417-437 (GMFN…PTVL), and 449-469 (ISGI…SFLI).

The protein belongs to the major facilitator superfamily. EmrB family.

The protein localises to the cell membrane. In terms of biological role, responsible for the uptake of uridine and deoxyuridine. Not involved in purine nucleoside uptake. The protein is Uridine/deoxyuridine transporter of Lactococcus lactis subsp. cremoris (strain MG1363).